Consider the following 280-residue polypeptide: Putative pyruvate, phosphate dikinase regulatory protein (280 aa).

Residue 158 to 165 coordinates ADP; it reads GVSRTSKT.

The protein belongs to the pyruvate, phosphate/water dikinase regulatory protein family. PDRP subfamily.

It catalyses the reaction N(tele)-phospho-L-histidyl/L-threonyl-[pyruvate, phosphate dikinase] + ADP = N(tele)-phospho-L-histidyl/O-phospho-L-threonyl-[pyruvate, phosphate dikinase] + AMP + H(+). The catalysed reaction is N(tele)-phospho-L-histidyl/O-phospho-L-threonyl-[pyruvate, phosphate dikinase] + phosphate + H(+) = N(tele)-phospho-L-histidyl/L-threonyl-[pyruvate, phosphate dikinase] + diphosphate. Bifunctional serine/threonine kinase and phosphorylase involved in the regulation of the pyruvate, phosphate dikinase (PPDK) by catalyzing its phosphorylation/dephosphorylation. The polypeptide is Putative pyruvate, phosphate dikinase regulatory protein (Lactobacillus johnsonii (strain CNCM I-12250 / La1 / NCC 533)).